Here is a 902-residue protein sequence, read N- to C-terminus: DNA mismatch repair protein MutS (902 aa).

654-661 is a binding site for ATP; sequence GPNMGGKS.

It belongs to the DNA mismatch repair MutS family.

Its function is as follows. This protein is involved in the repair of mismatches in DNA. It is possible that it carries out the mismatch recognition step. This protein has a weak ATPase activity. In Xanthomonas axonopodis pv. citri (strain 306), this protein is DNA mismatch repair protein MutS.